The primary structure comprises 1392 residues: DNA-directed RNA polymerase subunit beta'' (1392 aa).

Zn(2+) contacts are provided by C224, C295, C302, and C305.

Belongs to the RNA polymerase beta' chain family. RpoC2 subfamily. In terms of assembly, in plastids the minimal PEP RNA polymerase catalytic core is composed of four subunits: alpha, beta, beta', and beta''. When a (nuclear-encoded) sigma factor is associated with the core the holoenzyme is formed, which can initiate transcription. Requires Zn(2+) as cofactor.

It is found in the plastid. It localises to the chloroplast. It carries out the reaction RNA(n) + a ribonucleoside 5'-triphosphate = RNA(n+1) + diphosphate. DNA-dependent RNA polymerase catalyzes the transcription of DNA into RNA using the four ribonucleoside triphosphates as substrates. This chain is DNA-directed RNA polymerase subunit beta'', found in Solanum lycopersicum (Tomato).